A 250-amino-acid polypeptide reads, in one-letter code: Bacteriorhodopsin-I (250 aa).

The next 7 membrane-spanning stretches (helical) occupy residues 7–27 (EGIW…YFIA), 42–62 (IATI…ALGF), 81–101 (YTDW…LAGA), 114–134 (VLMI…VLSA), 139–159 (LVWW…LFSS), 185–205 (VWLV…LVGI), and 207–227 (IETA…GIIL). At Lys-220 the chain carries N6-(retinylidene)lysine.

Belongs to the archaeal/bacterial/fungal opsin family. The covalent binding of retinal to the apoprotein, bacterioopsin, generates bacteriorhodopsin.

The protein localises to the membrane. Functionally, light-driven proton pump. In Haloarcula marismortui (strain ATCC 43049 / DSM 3752 / JCM 8966 / VKM B-1809) (Halobacterium marismortui), this protein is Bacteriorhodopsin-I (bop).